We begin with the raw amino-acid sequence, 95 residues long: Acylphosphatase (95 aa).

The Acylphosphatase-like domain maps to 7–93; the sequence is TWQLFAHGRV…QLFDRFDWLP (87 aa). Catalysis depends on residues arginine 22 and asparagine 40.

The protein belongs to the acylphosphatase family.

It catalyses the reaction an acyl phosphate + H2O = a carboxylate + phosphate + H(+). In Cupriavidus metallidurans (strain ATCC 43123 / DSM 2839 / NBRC 102507 / CH34) (Ralstonia metallidurans), this protein is Acylphosphatase (acyP).